Reading from the N-terminus, the 1341-residue chain is DNA-directed RNA polymerase subunit beta (1341 aa).

The protein belongs to the RNA polymerase beta chain family. The RNAP catalytic core consists of 2 alpha, 1 beta, 1 beta' and 1 omega subunit. When a sigma factor is associated with the core the holoenzyme is formed, which can initiate transcription.

The catalysed reaction is RNA(n) + a ribonucleoside 5'-triphosphate = RNA(n+1) + diphosphate. Functionally, DNA-dependent RNA polymerase catalyzes the transcription of DNA into RNA using the four ribonucleoside triphosphates as substrates. In Photobacterium profundum (strain SS9), this protein is DNA-directed RNA polymerase subunit beta.